Here is a 406-residue protein sequence, read N- to C-terminus: Peptidase T (406 aa).

H77 contacts Zn(2+). Residue D79 is part of the active site. A Zn(2+)-binding site is contributed by D139. The Proton acceptor role is filled by E173. Residues E174, D196, and H377 each contribute to the Zn(2+) site.

Belongs to the peptidase M20B family. Zn(2+) serves as cofactor.

The protein localises to the cytoplasm. It carries out the reaction Release of the N-terminal residue from a tripeptide.. In terms of biological role, cleaves the N-terminal amino acid of tripeptides. This is Peptidase T from Parabacteroides distasonis (strain ATCC 8503 / DSM 20701 / CIP 104284 / JCM 5825 / NCTC 11152).